A 430-amino-acid polypeptide reads, in one-letter code: Adenylosuccinate synthetase (430 aa).

GTP-binding positions include 12–18 (GDEGKGK) and 40–42 (GHT). The active-site Proton acceptor is the Asp13. Mg(2+) is bound by residues Asp13 and Gly40. IMP is bound by residues 13 to 16 (DEGK), 38 to 41 (NAGH), Thr130, Arg144, Gln224, Thr239, and Arg303. His41 functions as the Proton donor in the catalytic mechanism. Position 299–305 (299–305 (VVTGRKR)) interacts with substrate. Residues Arg305, 331–333 (KLD), and 413–415 (STS) each bind GTP.

Belongs to the adenylosuccinate synthetase family. Homodimer. Mg(2+) is required as a cofactor.

Its subcellular location is the cytoplasm. The enzyme catalyses IMP + L-aspartate + GTP = N(6)-(1,2-dicarboxyethyl)-AMP + GDP + phosphate + 2 H(+). The protein operates within purine metabolism; AMP biosynthesis via de novo pathway; AMP from IMP: step 1/2. Functionally, plays an important role in the de novo pathway of purine nucleotide biosynthesis. Catalyzes the first committed step in the biosynthesis of AMP from IMP. This is Adenylosuccinate synthetase from Methylobacterium sp. (strain 4-46).